A 733-amino-acid polypeptide reads, in one-letter code: Phosphoribosylformylglycinamidine synthase subunit PurL (733 aa).

His42 is a catalytic residue. 2 residues coordinate ATP: Tyr45 and Lys84. A Mg(2+)-binding site is contributed by Glu86. Substrate contacts are provided by residues 87–90 (SHNH) and Arg109. The active-site Proton acceptor is His88. Asp110 lines the Mg(2+) pocket. Gln233 lines the substrate pocket. Asp261 provides a ligand contact to Mg(2+). 305-307 (ESQ) contacts substrate. Residues Asp489 and Gly526 each coordinate ATP. Asn527 provides a ligand contact to Mg(2+). A substrate-binding site is contributed by Ser529.

This sequence belongs to the FGAMS family. Monomer. Part of the FGAM synthase complex composed of 1 PurL, 1 PurQ and 2 PurS subunits.

It localises to the cytoplasm. The catalysed reaction is N(2)-formyl-N(1)-(5-phospho-beta-D-ribosyl)glycinamide + L-glutamine + ATP + H2O = 2-formamido-N(1)-(5-O-phospho-beta-D-ribosyl)acetamidine + L-glutamate + ADP + phosphate + H(+). The protein operates within purine metabolism; IMP biosynthesis via de novo pathway; 5-amino-1-(5-phospho-D-ribosyl)imidazole from N(2)-formyl-N(1)-(5-phospho-D-ribosyl)glycinamide: step 1/2. Its function is as follows. Part of the phosphoribosylformylglycinamidine synthase complex involved in the purines biosynthetic pathway. Catalyzes the ATP-dependent conversion of formylglycinamide ribonucleotide (FGAR) and glutamine to yield formylglycinamidine ribonucleotide (FGAM) and glutamate. The FGAM synthase complex is composed of three subunits. PurQ produces an ammonia molecule by converting glutamine to glutamate. PurL transfers the ammonia molecule to FGAR to form FGAM in an ATP-dependent manner. PurS interacts with PurQ and PurL and is thought to assist in the transfer of the ammonia molecule from PurQ to PurL. The protein is Phosphoribosylformylglycinamidine synthase subunit PurL of Moorella thermoacetica (strain ATCC 39073 / JCM 9320).